We begin with the raw amino-acid sequence, 548 residues long: Cytochrome P450 monooxygenase hepE (548 aa).

Cysteine 485 contacts heme.

The protein belongs to the cytochrome P450 family. The cofactor is heme.

It participates in secondary metabolite biosynthesis. Its function is as follows. Cytochrome P450 monooxygenase; part of the gene cluster that mediates the biosynthesis of heptelidic acid (HA), a sesquiterpene lactone that acts as an inhibitor of glyceraldehyde-3-phosphatedehydrogenase (GAPDH) and a growth inhibitor of the salt-tolerant lactic acid bacteria in soy sauce brewing. In Aspergillus oryzae (strain ATCC 42149 / RIB 40) (Yellow koji mold), this protein is Cytochrome P450 monooxygenase hepE.